The following is a 302-amino-acid chain: Acetylglutamate kinase (302 aa).

Residues 67-68 (GG), R89, and N194 each bind substrate.

This sequence belongs to the acetylglutamate kinase family. ArgB subfamily.

The protein resides in the cytoplasm. The catalysed reaction is N-acetyl-L-glutamate + ATP = N-acetyl-L-glutamyl 5-phosphate + ADP. It participates in amino-acid biosynthesis; L-arginine biosynthesis; N(2)-acetyl-L-ornithine from L-glutamate: step 2/4. Catalyzes the ATP-dependent phosphorylation of N-acetyl-L-glutamate. The chain is Acetylglutamate kinase from Hahella chejuensis (strain KCTC 2396).